Consider the following 807-residue polypeptide: 1-phosphatidylinositol 4,5-bisphosphate phosphodiesterase delta-4 (807 aa).

The PH domain maps to 16-124 (LLMQEGTMMR…WMRGLQLLVD (109 aa)). The tract at residues 26-53 (KVRTKSWKKLRYFRLQNDGMTVWHGSQP) is substrate binding. 3 consecutive EF-hand domains span residues 134 to 169 (QMDQ…MNVE), 170 to 205 (MDEE…LTKR), and 203 to 237 (TKRT…EQKE). Ca(2+) contacts are provided by Asp-147, Asn-149, Asp-151, Arg-153, Glu-158, Asp-183, Ser-187, Asp-189, and Glu-194. A GBA motif is present at residues 213–243 (EDFSSDKQKLTLLEFVDFLRKEQKEKDHAPD). One can recognise a PI-PLC X-box domain in the interval 290–435 (QDMTQPLSHY…LRGKILVKGK (146 aa)). His-305 is an active-site residue. Ca(2+) is bound by residues Asn-306, Glu-335, and Asp-337. His-350 is an active-site residue. Residue Glu-384 coordinates Ca(2+). Residues Lys-433 and Lys-435 each coordinate substrate. The disordered stretch occupies residues 442–490 (VDKEEEEEEEEEELEKDEGPDLDPASPELDTQPQPETQGQAAGNKKERK). Residues 443-462 (DKEEEEEEEEEELEKDEGPD) show a composition bias toward acidic residues. The span at 470–482 (LDTQPQPETQGQA) shows a compositional bias: polar residues. Positions 538–654 (LSALVVYLRT…GYVLKPEFLR (117 aa)) constitute a PI-PLC Y-box domain. Ser-567 and Arg-594 together coordinate substrate. Residues 654-781 (RDTQSSFNPE…QGYRHVSLLS (128 aa)) enclose the C2 domain. Residues Asp-697, Asn-721, Asp-750, and Tyr-751 each contribute to the Ca(2+) site. The PDZ-binding signature appears at 776 to 779 (HVSL).

As to quaternary structure, interacts with GRIP1. Interacts (via GBA motif) with guanine nucleotide-binding protein G(i) alpha subunit GNAI3 (inactive GDP-bound form)l low-affinity interaction. Ca(2+) serves as cofactor.

It is found in the membrane. Its subcellular location is the nucleus. The protein localises to the cytoplasm. It localises to the endoplasmic reticulum. The enzyme catalyses a 1,2-diacyl-sn-glycero-3-phospho-(1D-myo-inositol-4,5-bisphosphate) + H2O = 1D-myo-inositol 1,4,5-trisphosphate + a 1,2-diacyl-sn-glycerol + H(+). It catalyses the reaction a 1,2-diacyl-sn-glycero-3-phospho-(1D-myo-inositol) + H2O = 1D-myo-inositol 1-phosphate + a 1,2-diacyl-sn-glycerol + H(+). In terms of biological role, hydrolyzes the phosphatidylinositol 4,5-bisphosphate (PIP2) to generate 2 second messenger molecules diacylglycerol (DAG) and inositol 1,4,5-trisphosphate (IP3). DAG mediates the activation of protein kinase C (PKC), while IP3 releases Ca(2+) from intracellular stores. Required for acrosome reaction in sperm during fertilization, probably by acting as an important enzyme for intracellular Ca(2+) mobilization in the zona pellucida-induced acrosome reaction. May play a role in cell growth. Modulates the liver regeneration in cooperation with nuclear PKC. Overexpression up-regulates the Erk signaling pathway and proliferation. The polypeptide is 1-phosphatidylinositol 4,5-bisphosphate phosphodiesterase delta-4 (Mus musculus (Mouse)).